The primary structure comprises 309 residues: NmrA-like family domain-containing protein 1 (309 aa).

Residues 11 to 16, 37 to 41, 58 to 59, 79 to 81, Lys102, Lys143, and 165 to 168 each bind NADP(+); these read GATGAQ, RNPEQ, DQ, TNY, and YFEN. Positions 163 to 199 are interaction with ASS1; that stretch reads PCYFENLLSYFLPQKAADGKSFLLDLPMGDVPMDGMS.

The protein belongs to the NmrA-type oxidoreductase family. As to quaternary structure, homodimer. Interacts with ASS1. Interaction is enhanced by low NADPH/NADP(+) ratios, which results in inhibition of ASS1 activity.

It is found in the cytoplasm. The protein resides in the perinuclear region. Its subcellular location is the nucleus. In terms of biological role, redox sensor protein. Undergoes restructuring and subcellular redistribution in response to changes in intracellular NADPH/NADP(+) levels. At low NADPH concentrations the protein is found mainly as a monomer, and binds argininosuccinate synthase (ASS1), the enzyme involved in nitric oxide synthesis. Association with ASS1 impairs its activity and reduces the production of nitric oxide, which subsecuently prevents apoptosis. Under normal NADPH concentrations, the protein is found as a dimer and hides the binding site for ASS1. The homodimer binds one molecule of NADPH. Has higher affinity for NADPH than for NADP(+). Binding to NADPH is necessary to form a stable dimer. The polypeptide is NmrA-like family domain-containing protein 1 (Nmral1) (Mus musculus (Mouse)).